A 144-amino-acid chain; its full sequence is Prefoldin subunit alpha (144 aa).

It belongs to the prefoldin alpha subunit family. As to quaternary structure, heterohexamer of two alpha and four beta subunits.

It localises to the cytoplasm. In terms of biological role, molecular chaperone capable of stabilizing a range of proteins. Seems to fulfill an ATP-independent, HSP70-like function in archaeal de novo protein folding. This chain is Prefoldin subunit alpha, found in Methanococcus maripaludis (strain C5 / ATCC BAA-1333).